The chain runs to 294 residues: 33 kDa chaperonin (294 aa).

2 cysteine pairs are disulfide-bonded: C239–C241 and C272–C275.

This sequence belongs to the HSP33 family. In terms of processing, under oxidizing conditions two disulfide bonds are formed involving the reactive cysteines. Under reducing conditions zinc is bound to the reactive cysteines and the protein is inactive.

It is found in the cytoplasm. Its function is as follows. Redox regulated molecular chaperone. Protects both thermally unfolding and oxidatively damaged proteins from irreversible aggregation. Plays an important role in the bacterial defense system toward oxidative stress. The sequence is that of 33 kDa chaperonin from Listeria monocytogenes serotype 4b (strain CLIP80459).